Here is a 433-residue protein sequence, read N- to C-terminus: Histidine--tRNA ligase (433 aa).

The protein belongs to the class-II aminoacyl-tRNA synthetase family. As to quaternary structure, homodimer.

The protein resides in the cytoplasm. The catalysed reaction is tRNA(His) + L-histidine + ATP = L-histidyl-tRNA(His) + AMP + diphosphate + H(+). The sequence is that of Histidine--tRNA ligase from Azoarcus sp. (strain BH72).